Reading from the N-terminus, the 66-residue chain is DNA-directed RNA polymerase subunit Rpo10 (66 aa).

Residues cysteine 7, cysteine 10, cysteine 44, and cysteine 45 each coordinate Zn(2+).

The protein belongs to the archaeal Rpo10/eukaryotic RPB10 RNA polymerase subunit family. Part of the RNA polymerase complex. The cofactor is Zn(2+).

The protein resides in the cytoplasm. The catalysed reaction is RNA(n) + a ribonucleoside 5'-triphosphate = RNA(n+1) + diphosphate. Functionally, DNA-dependent RNA polymerase (RNAP) catalyzes the transcription of DNA into RNA using the four ribonucleoside triphosphates as substrates. The sequence is that of DNA-directed RNA polymerase subunit Rpo10 from Hyperthermus butylicus (strain DSM 5456 / JCM 9403 / PLM1-5).